The sequence spans 458 residues: Plant UBX domain-containing protein 2 (458 aa).

Residues 1-103 form a disordered region; that stretch reads MDDVKDKLKG…APQDGFDPYG (103 aa). Over residues 44-54 the composition is skewed to polar residues; it reads PIQNRFNSSQA. Over residues 56–70 the composition is skewed to pro residues; it reads NPTPRPKPNPNPLPE. The span at 74–85 shows a compositional bias: polar residues; the sequence is SSSDQKISGSTR. A C2H2-type; atypical zinc finger spans residues 121-143; it reads FECPICKNPFTSEEEVSVHVESC. One can recognise a PUB domain in the interval 181-248; that stretch reads SSIDVLLRLF…EIWAVMDVPS (68 aa). A UBX domain is found at 349 to 433; the sequence is KRYKRSMIRV…ELVPSALIRF (85 aa).

Interacts with CDC48A in vitro and co-fractionates with membrane-associated but not soluble CDC48A in vivo.

The protein resides in the membrane. Facilitates the interaction of SYP31 and CDC48A, thereby regulating an CDC48A membrane-associated function. Appears to act as a negative regulator mediating the powdery mildew-plant interaction. This Arabidopsis thaliana (Mouse-ear cress) protein is Plant UBX domain-containing protein 2.